The chain runs to 380 residues: Cytochrome b (380 aa).

Transmembrane regions (helical) follow at residues 33–53 (FGSL…FLAM), 77–98 (WFIR…YIHV), 113–133 (WNVG…GYVL), and 178–198 (FFAF…VHLL). Heme b-binding residues include His83 and His97. His182 and His196 together coordinate heme b. His201 contacts a ubiquinone. The next 4 helical transmembrane spans lie at 226-246 (TKDI…VLFA), 288-308 (LGGV…PYLY), 320-340 (LTQL…WIGA), and 347-367 (FITI…ILMP).

It belongs to the cytochrome b family. In terms of assembly, the cytochrome bc1 complex contains 11 subunits: 3 respiratory subunits (MT-CYB, CYC1 and UQCRFS1), 2 core proteins (UQCRC1 and UQCRC2) and 6 low-molecular weight proteins (UQCRH/QCR6, UQCRB/QCR7, UQCRQ/QCR8, UQCR10/QCR9, UQCR11/QCR10 and a cleavage product of UQCRFS1). This cytochrome bc1 complex then forms a dimer. Heme b is required as a cofactor.

The protein resides in the mitochondrion inner membrane. Functionally, component of the ubiquinol-cytochrome c reductase complex (complex III or cytochrome b-c1 complex) that is part of the mitochondrial respiratory chain. The b-c1 complex mediates electron transfer from ubiquinol to cytochrome c. Contributes to the generation of a proton gradient across the mitochondrial membrane that is then used for ATP synthesis. The protein is Cytochrome b (MT-CYB) of Cricetomys emini (Emin's giant pouched rat).